The primary structure comprises 308 residues: 26S proteasome non-ATPase regulatory subunit 14 (308 aa).

Positions 29-164 (VYISSLALLK…IDAFRLINPN (136 aa)) constitute an MPN domain. Histidine 111, histidine 113, and aspartate 124 together coordinate Zn(2+). The short motif at 111–124 (HSHPGFGCWLSGVD) is the JAMM motif element.

Belongs to the peptidase M67A family. PSMD14 subfamily. Component of the 19S regulatory cap of the 26S proteasome.

Functionally, metalloprotease component of the 26S proteasome that specifically cleaves 'Lys-63'-linked polyubiquitin chains. The 26S proteasome is involved in the ATP-dependent degradation of ubiquitinated proteins. The function of the 'Lys-63'-specific deubiquitination of the proteasome is unclear. The sequence is that of 26S proteasome non-ATPase regulatory subunit 14 (Rpn11) from Drosophila melanogaster (Fruit fly).